The following is a 411-amino-acid chain: Arginine deiminase (411 aa).

The Amidino-cysteine intermediate role is filled by Cys401.

It belongs to the arginine deiminase family.

It localises to the cytoplasm. The enzyme catalyses L-arginine + H2O = L-citrulline + NH4(+). It participates in amino-acid degradation; L-arginine degradation via ADI pathway; carbamoyl phosphate from L-arginine: step 1/2. This chain is Arginine deiminase, found in Streptococcus pyogenes serotype M49 (strain NZ131).